Here is a 396-residue protein sequence, read N- to C-terminus: Maltose/maltodextrin-binding periplasmic protein (396 aa).

An N-terminal signal peptide occupies residues 1 to 26 (MKIKTGARILALSALTTMMFSASALA).

It belongs to the bacterial solute-binding protein 1 family. In terms of assembly, the complex is composed of two ATP-binding proteins (MalK), two transmembrane proteins (MalG and MalF) and a solute-binding protein (MalE).

It localises to the periplasm. Its function is as follows. Part of the ABC transporter complex MalEFGK involved in maltose/maltodextrin import. Binds maltose and higher maltodextrins. This chain is Maltose/maltodextrin-binding periplasmic protein (malE), found in Klebsiella aerogenes (Enterobacter aerogenes).